A 299-amino-acid polypeptide reads, in one-letter code: Oxygen-dependent coproporphyrinogen-III oxidase (299 aa).

S92 contributes to the substrate binding site. The Mn(2+) site is built by H96 and H106. H106 serves as the catalytic Proton donor. Position 108-110 (N108–R110) interacts with substrate. Residues H145 and H175 each coordinate Mn(2+). The important for dimerization stretch occupies residues Y240 to E275. G258–R260 contacts substrate.

It belongs to the aerobic coproporphyrinogen-III oxidase family. Homodimer. Requires Mn(2+) as cofactor.

The protein localises to the cytoplasm. It carries out the reaction coproporphyrinogen III + O2 + 2 H(+) = protoporphyrinogen IX + 2 CO2 + 2 H2O. It functions in the pathway porphyrin-containing compound metabolism; protoporphyrin-IX biosynthesis; protoporphyrinogen-IX from coproporphyrinogen-III (O2 route): step 1/1. Involved in the heme biosynthesis. Catalyzes the aerobic oxidative decarboxylation of propionate groups of rings A and B of coproporphyrinogen-III to yield the vinyl groups in protoporphyrinogen-IX. In Escherichia coli O17:K52:H18 (strain UMN026 / ExPEC), this protein is Oxygen-dependent coproporphyrinogen-III oxidase.